Consider the following 145-residue polypeptide: Transcription antitermination protein NusB (145 aa).

It belongs to the NusB family.

Involved in transcription antitermination. Required for transcription of ribosomal RNA (rRNA) genes. Binds specifically to the boxA antiterminator sequence of the ribosomal RNA (rrn) operons. The polypeptide is Transcription antitermination protein NusB (Aromatoleum aromaticum (strain DSM 19018 / LMG 30748 / EbN1) (Azoarcus sp. (strain EbN1))).